The sequence spans 348 residues: Phospho-2-dehydro-3-deoxyheptonate aldolase, Trp-sensitive (348 aa).

It belongs to the class-I DAHP synthase family.

The catalysed reaction is D-erythrose 4-phosphate + phosphoenolpyruvate + H2O = 7-phospho-2-dehydro-3-deoxy-D-arabino-heptonate + phosphate. It participates in metabolic intermediate biosynthesis; chorismate biosynthesis; chorismate from D-erythrose 4-phosphate and phosphoenolpyruvate: step 1/7. Its function is as follows. Stereospecific condensation of phosphoenolpyruvate (PEP) and D-erythrose-4-phosphate (E4P) giving rise to 3-deoxy-D-arabino-heptulosonate-7-phosphate (DAHP). The chain is Phospho-2-dehydro-3-deoxyheptonate aldolase, Trp-sensitive (aroH) from Buchnera aphidicola subsp. Baizongia pistaciae (strain Bp).